Consider the following 454-residue polypeptide: SPSSPTVFPLVSCESPLSDENLVAMGCLARDFLPSSISFSWNYQNKSEVNQGVRTFPTLRMGEKYAATSQVFLPPKSVLEGSDEYLVCKVHHGNTNKDLRVPIPVVTEMNPNVSVFVPSRDAFSGPAPRKSRLFCEASNFSPKQITVSWLRDGKPVKSGFTTEPVTPEDRGSGPRTYKVISTLTITESDWLNLSVYTCRVDHRGLTFWKNVSSTCAASPSTDIQAFPIPPSFVGIFLNKSATLTCLVTNLATYDTLNISWSSRSGEPLETKTKLTESHPNGTFSAIGEANVCVEDWDSGKEFVCTVTHRDLPSPQKKFISKPREMNKTPPAVYQQPLAREQLILRESATVTCLVKGFSPADIFVQWLQRGQPLSQDKYVTSAPMREPQAPHLYFTHSVLTVTEEEWNSGETYTCVVGHEALPHMVTERTVDRSTGKPTLYNVSLIMSDAGGTCY.

Positions 1 to 105 are CH1; the sequence is SPSSPTVFPL…NKDLRVPIPV (105 aa). Cys27 and Cys88 are oxidised to a cystine. Residues Asn45, Asn112, Asn192, Asn210, Asn238, Asn257, and Asn280 are each glycosylated (N-linked (GlcNAc...) asparagine). Residues 106–218 are CH2; the sequence is VTEMNPNVSV…KNVSSTCAAS (113 aa). An intrachain disulfide couples Cys135 to Cys198. The CH3 stretch occupies residues 219 to 324; it reads PSTDIQAFPI…QKKFISKPRE (106 aa). 2 disulfide bridges follow: Cys245–Cys304 and Cys352–Cys414. The interval 325-454 is CH4; the sequence is MNKTPPAVYQ…IMSDAGGTCY (130 aa). Asn441 is a glycosylation site (N-linked (GlcNAc...) asparagine).

This Mesocricetus auratus (Golden hamster) protein is Ig mu chain C region.